Consider the following 331-residue polypeptide: Adenosine deaminase (331 aa).

The Zn(2+) site is built by H12 and H14. Residues H14, D16, and G170 each contribute to the substrate site. Zn(2+) is bound at residue H197. E200 (proton donor) is an active-site residue. A Zn(2+)-binding site is contributed by D278. A substrate-binding site is contributed by D279.

It belongs to the metallo-dependent hydrolases superfamily. Adenosine and AMP deaminases family. Adenosine deaminase subfamily. Zn(2+) is required as a cofactor.

It carries out the reaction adenosine + H2O + H(+) = inosine + NH4(+). The catalysed reaction is 2'-deoxyadenosine + H2O + H(+) = 2'-deoxyinosine + NH4(+). In terms of biological role, catalyzes the hydrolytic deamination of adenosine and 2-deoxyadenosine. The protein is Adenosine deaminase of Shewanella baltica (strain OS185).